We begin with the raw amino-acid sequence, 264 residues long: Phosphoinositide-3-kinase-interacting protein 1 (264 aa).

An N-terminal signal peptide occupies residues 1–21 (MLLAWVHTFLLSNMLLAEAYG). The Extracellular segment spans residues 22 to 170 (SGGCFWDNGH…SKEKKDLGTL (149 aa)). The region spanning 24–101 (GCFWDNGHLY…EKRPCEDVSC (78 aa)) is the Kringle domain. Cystine bridges form between cysteine 25-cysteine 101, cysteine 46-cysteine 82, and cysteine 70-cysteine 96. A disordered region spans residues 94-129 (RPCEDVSCPETTSQAPPPSSAMELEEKSGAPGDKEA). Residues 117-129 (LEEKSGAPGDKEA) show a composition bias toward basic and acidic residues. The helical transmembrane segment at 171-191 (GYVLGITMMVIILAIGAGIIV) threads the bilayer. Residues 192 to 264 (GYTYKRGKDL…LTGQAGTPGA (73 aa)) are Cytoplasmic-facing.

It is found in the cell membrane. Functionally, negative regulator of hepatic phosphatidylinositol 3-kinase (PI3K) activity. This Mus musculus (Mouse) protein is Phosphoinositide-3-kinase-interacting protein 1 (Pik3ip1).